The primary structure comprises 339 residues: D-erythrose-4-phosphate dehydrogenase (339 aa).

12 to 13 (RI) contacts NAD(+). Residues 154–156 (SCT), Arg-200, 213–214 (TK), and Arg-236 contribute to the substrate site. Cys-155 acts as the Nucleophile in catalysis. Asn-318 contributes to the NAD(+) binding site.

The protein belongs to the glyceraldehyde-3-phosphate dehydrogenase family. Epd subfamily. In terms of assembly, homotetramer.

The protein localises to the cytoplasm. It catalyses the reaction D-erythrose 4-phosphate + NAD(+) + H2O = 4-phospho-D-erythronate + NADH + 2 H(+). It functions in the pathway cofactor biosynthesis; pyridoxine 5'-phosphate biosynthesis; pyridoxine 5'-phosphate from D-erythrose 4-phosphate: step 1/5. In terms of biological role, catalyzes the NAD-dependent conversion of D-erythrose 4-phosphate to 4-phosphoerythronate. The chain is D-erythrose-4-phosphate dehydrogenase from Photorhabdus laumondii subsp. laumondii (strain DSM 15139 / CIP 105565 / TT01) (Photorhabdus luminescens subsp. laumondii).